Consider the following 1349-residue polypeptide: Serine/threonine-protein kinase GIN4 (1349 aa).

Residues methionine 1–asparagine 20 are compositionally biased toward low complexity. Positions methionine 1–leucine 30 are disordered. A phosphoserine mark is found at serine 10, serine 11, serine 12, and serine 15. One can recognise a Protein kinase domain in the interval tryptophan 28–leucine 288. ATP-binding positions include leucine 34 to valine 42 and lysine 57. Phosphothreonine is present on threonine 69. The Proton acceptor role is filled by aspartate 158. A Phosphothreonine modification is found at threonine 191. Phosphoserine occurs at positions 294, 300, and 303. Disordered regions lie at residues glutamine 366 to proline 498 and serine 510 to aspartate 532. Low complexity predominate over residues asparagine 369–lysine 384. Residues serine 388, serine 390, and serine 393 each carry the phosphoserine modification. Threonine 397 is subject to Phosphothreonine. 2 stretches are compositionally biased toward polar residues: residues isoleucine 406–serine 418 and alanine 426–asparagine 442. Serine 407 and serine 409 each carry phosphoserine. Position 412 is a phosphothreonine (threonine 412). Serine 413 is modified (phosphoserine). Residues serine 443 to tyrosine 470 are compositionally biased toward low complexity. A phosphoserine mark is found at serine 455, serine 469, serine 473, serine 477, and serine 485. A compositionally biased stretch (polar residues) spans asparagine 471–glutamine 488. Serine 556 is subject to Phosphoserine. Residues arginine 570–lysine 585 show a composition bias toward low complexity. Positions arginine 570–isoleucine 593 are disordered. A Phosphoserine modification is found at serine 634. Residues glutamate 661–isoleucine 701 adopt a coiled-coil conformation. The tract at residues lysine 712–lysine 737 is disordered. Residues serine 720 and serine 746 each carry the phosphoserine modification. The interval threonine 756 to asparagine 798 is disordered. Phosphothreonine occurs at positions 778, 869, and 876. Serine 891 carries the phosphoserine modification. The residue at position 941 (threonine 941) is a Phosphothreonine. Serine 973 carries the post-translational modification Phosphoserine. Residues threonine 990 and threonine 992 each carry the phosphothreonine modification. Serine 999 bears the Phosphoserine mark. Residues arginine 1011–serine 1229 are disordered. Polar residues predominate over residues arginine 1024–arginine 1040. Residues lysine 1044–tyrosine 1053 show a composition bias toward basic and acidic residues. Threonine 1056 carries the phosphothreonine modification. Phosphoserine occurs at positions 1059, 1074, 1077, 1078, 1080, and 1094. Positions valine 1083–serine 1094 are enriched in basic and acidic residues. Residue threonine 1095 is modified to Phosphothreonine. 2 positions are modified to phosphoserine: serine 1097 and serine 1098. Threonine 1106 is subject to Phosphothreonine. Polar residues predominate over residues isoleucine 1134 to serine 1149. Position 1154 is a phosphoserine (serine 1154). Residues asparagine 1202 to glutamine 1215 show a composition bias toward low complexity. Serine 1218 is modified (phosphoserine).

The protein belongs to the protein kinase superfamily. CAMK Ser/Thr protein kinase family. NIM1 subfamily. Associates with the septin complex which consists of CDC3, CDC10, CDC11, CDC12, and SEP7. Post-translationally, hyperphosphorylated during mitosis at dozens of sites. Among these, 7 have perfect or minimal CDK consensus sites and are CDC28 targets.

Its subcellular location is the cytoplasm. The protein localises to the bud neck. It catalyses the reaction L-seryl-[protein] + ATP = O-phospho-L-seryl-[protein] + ADP + H(+). The catalysed reaction is L-threonyl-[protein] + ATP = O-phospho-L-threonyl-[protein] + ADP + H(+). Its function is as follows. Serine/threonine-protein kinase which regulates the localization and the function of the septins during mitosis. Involved in the formation of the septin ring but not the basal septin band. Phosphorylates septins CDC11 and SEP7. Required for the transition from pseudohyphae to hyphae. Acts upstream of IRS4 and INP51 in regulating cell wall integrity responses. Involved in propolis-induced cell death. This is Serine/threonine-protein kinase GIN4 (GIN4) from Candida albicans (strain SC5314 / ATCC MYA-2876) (Yeast).